Reading from the N-terminus, the 317-residue chain is Inositol oxygenase 4 (317 aa).

Substrate-binding positions include Arg58 and 115 to 117 (DES). Fe cation contacts are provided by His128, His153, and Asp154. Substrate contacts are provided by residues Lys157 and 174–175 (GD). Fe cation-binding residues include His226, His252, and Asp285. 252 to 253 (HS) is a substrate binding site.

It belongs to the myo-inositol oxygenase family. Fe cation is required as a cofactor. Expressed in flowers, leaves, siliques, and to a lesser extent in roots.

The protein localises to the cytoplasm. It catalyses the reaction myo-inositol + O2 = D-glucuronate + H2O + H(+). Its pathway is polyol metabolism; myo-inositol degradation into D-glucuronate; D-glucuronate from myo-inositol: step 1/1. Catalyzes the oxygenative cleavage of myo-inositol to D-glucuronate. Involved in the biosynthesis of UDP-glucuronic acid (UDP-GlcA), providing nucleotide sugars for cell-wall polymers. May be also involved in plant ascorbate biosynthesis. The chain is Inositol oxygenase 4 (MIOX4) from Arabidopsis thaliana (Mouse-ear cress).